Consider the following 569-residue polypeptide: Protein ste7 (569 aa).

2 disordered regions span residues 195–219 (APITTSSATHTSQFSTSSSSSVNSV) and 255–274 (FSVSSASDPPQTPISMSPPI). Low complexity predominate over residues 198-219 (TTSSATHTSQFSTSSSSSVNSV). The segment covering 264 to 274 (PQTPISMSPPI) has biased composition (pro residues).

It belongs to the arrestin family.

Functionally, has a role in promoting meiosis whereby it is involved in establishing the mating pheromone signaling pathway. It also has a role in suppressing meiosis until the conjugation process is complete. In Schizosaccharomyces pombe (strain 972 / ATCC 24843) (Fission yeast), this protein is Protein ste7 (ste7).